Reading from the N-terminus, the 1470-residue chain is Membrane-associated guanylate kinase, WW and PDZ domain-containing protein 3 (1470 aa).

The PDZ 1 domain maps to 18 to 108; it reads CAVSWAGPPG…PIRLKTVKPG (91 aa). An interaction with ADRB1 and TGFA region spans residues 18–108; that stretch reads CAVSWAGPPG…PIRLKTVKPG (91 aa). Residues 116–290 enclose the Guanylate kinase-like domain; that stretch reads RHYLSLQFQK…RSMDFRNYMM (175 aa). 123–130 is an ATP binding site; it reads FQKGSIDH. The interval 184 to 266 is disordered; that stretch reads TYDGNFYGTP…ETREMHSESS (83 aa). Pro residues predominate over residues 193–204; the sequence is PKPPAEPSPFQP. Serine 236 bears the Phosphoserine mark. Acidic residues predominate over residues 238 to 247; the sequence is LPEEEEDEDK. 2 consecutive WW domains span residues 296 to 329 and 342 to 375; these read EPLPKNWEMAYTDTGTIYFIDHNTKTTTWLDPRL and GELPYGWEKIEDPQYGTYYVDHLNQKTQFENPVE. In terms of domain architecture, PDZ 2 spans 413–495; the sequence is RASLKKSTMG…NQYVNLTLCR (83 aa). The tract at residues 413–495 is interaction with PTEN; it reads RASLKKSTMG…NQYVNLTLCR (83 aa). The interval 550–575 is disordered; the sequence is LLSSDRLNGPSDSNEQRASLASSGSS. Over residues 559–575 the composition is skewed to polar residues; that stretch reads PSDSNEQRASLASSGSS. A PDZ 3 domain is found at 581–657; it reads TIPLVKGPKG…GADVPLLILR (77 aa). Residue serine 598 is modified to Phosphoserine. Residues 665 to 700 form a disordered region; it reads KTAKMKTDTKETSGSLETINEPTPQPMPFPPSIIRS. The span at 676 to 686 shows a compositional bias: polar residues; the sequence is TSGSLETINEP. At serine 702 the chain carries Phosphoserine. The PDZ 4 domain maps to 729–811; sequence DVFLRKQESG…NGHVLLTVRR (83 aa). The interaction with ADGRB1 stretch occupies residues 729–811; the sequence is DVFLRKQESG…NGHVLLTVRR (83 aa). Residues 818 to 847 are disordered; sequence KQPEDESPQAFSQSGSPRLNRTELPTRSAP. Positions 826–847 are enriched in polar residues; that stretch reads QAFSQSGSPRLNRTELPTRSAP. Serine 833 and serine 916 each carry phosphoserine. Residues 852-939 form the PDZ 5 domain; that stretch reads DVILQRKENE…TVTLTVVAEE (88 aa). The interaction with LPAR2 and GRIN2B stretch occupies residues 852 to 939; the sequence is DVILQRKENE…TVTLTVVAEE (88 aa). The interval 939–976 is disordered; that stretch reads EEHHGPPSGTNSARQSPALQHRPMGQAQATHIPGDRTA. The segment covering 946-956 has biased composition (polar residues); that stretch reads SGTNSARQSPA. The region spanning 1022 to 1104 is the PDZ 6 domain; it reads PVELERGPRG…KVLLLLRPGT (83 aa). 2 disordered regions span residues 1124-1146 and 1167-1470; these read IYDEQPPPLPSSHSAATFEESHV and DTVQ…DKQL. Residues 1175 to 1191 show a composition bias toward polar residues; that stretch reads TLNGSQPEMKYQSIQKN. Basic and acidic residues-rich tracts occupy residues 1193-1209 and 1230-1263; these read SKKDPSRSHGHGDKNLL and RHSEEHLEKIPRPLRSDPKGKSRDRSLSPRKGEN. A compositionally biased stretch (polar residues) spans 1285–1304; the sequence is SSSPRKQQKIGGNSLSNTEG. Position 1321 is a phosphoserine (serine 1321). Composition is skewed to basic and acidic residues over residues 1326–1340, 1350–1361, 1377–1397, and 1422–1431; these read PEGKEKSGVSRKDLK, RSPEKRSSKVDE, VSEKEKGRKPGTGERSRDKTG, and EVTDRGKERA.

It belongs to the MAGUK family. In terms of assembly, interacts with ADRB1, ADGRB1, LPAR2/EDG4, FZD4, FZD7, GRIN2B, TGFA and VANGL2. Interacts with PTEN. Interacts with ADRB1, PTPRB and unidentified tyrosine phosphorylated proteins. Interacts with DLL1. Interacts with PRRG4 (via cytoplasmic domain).

It is found in the cell membrane. Its subcellular location is the cell junction. It localises to the tight junction. The protein localises to the nucleus. In terms of biological role, acts as a scaffolding protein at cell-cell junctions, thereby regulating various cellular and signaling processes. Cooperates with PTEN to modulate the kinase activity of AKT1. Its interaction with PTPRB and tyrosine phosphorylated proteins suggests that it may link receptor tyrosine phosphatase with its substrates at the plasma membrane. In polarized epithelial cells, involved in efficient trafficking of TGFA to the cell surface. Regulates the ability of LPAR2 to activate ERK and RhoA pathways. Regulates the JNK signaling cascade via its interaction with FZD4 and VANGL2. The polypeptide is Membrane-associated guanylate kinase, WW and PDZ domain-containing protein 3 (Magi3) (Rattus norvegicus (Rat)).